The primary structure comprises 77 residues: Large ribosomal subunit protein bL28 (77 aa).

This sequence belongs to the bacterial ribosomal protein bL28 family.

In Cupriavidus necator (strain ATCC 17699 / DSM 428 / KCTC 22496 / NCIMB 10442 / H16 / Stanier 337) (Ralstonia eutropha), this protein is Large ribosomal subunit protein bL28.